The primary structure comprises 122 residues: Large ribosomal subunit protein uL14c (122 aa).

It belongs to the universal ribosomal protein uL14 family. As to quaternary structure, part of the 50S ribosomal subunit.

Its subcellular location is the plastid. The protein resides in the chloroplast. Binds to 23S rRNA. In Jasminum nudiflorum (Winter jasmine), this protein is Large ribosomal subunit protein uL14c.